We begin with the raw amino-acid sequence, 378 residues long: Succinyl-diaminopimelate desuccinylase (378 aa).

Position 68 (His-68) interacts with Zn(2+). Asp-70 is a catalytic residue. Zn(2+) is bound at residue Asp-101. The active-site Proton acceptor is the Glu-135. Zn(2+) is bound by residues Glu-136, Glu-164, and His-350.

Belongs to the peptidase M20A family. DapE subfamily. As to quaternary structure, homodimer. It depends on Zn(2+) as a cofactor. Co(2+) is required as a cofactor.

The catalysed reaction is N-succinyl-(2S,6S)-2,6-diaminopimelate + H2O = (2S,6S)-2,6-diaminopimelate + succinate. It participates in amino-acid biosynthesis; L-lysine biosynthesis via DAP pathway; LL-2,6-diaminopimelate from (S)-tetrahydrodipicolinate (succinylase route): step 3/3. Functionally, catalyzes the hydrolysis of N-succinyl-L,L-diaminopimelic acid (SDAP), forming succinate and LL-2,6-diaminopimelate (DAP), an intermediate involved in the bacterial biosynthesis of lysine and meso-diaminopimelic acid, an essential component of bacterial cell walls. This is Succinyl-diaminopimelate desuccinylase from Vibrio campbellii (strain ATCC BAA-1116).